A 449-amino-acid chain; its full sequence is AP-4 complex subunit mu-1 (449 aa).

Positions 184 to 448 (KNEVFLDVVE…LSHSNAYVIR (265 aa)) constitute an MHD domain.

It belongs to the adaptor complexes medium subunit family. In terms of assembly, adaptor protein complex 4 (AP-4) is a heterotetramer composed of two large adaptins (epsilon-type subunit AP4E1 and beta-type subunit AP4B1), a medium adaptin (mu-type subunit AP4M1) and a small adaptin (sigma-type AP4S1). Interacts with tyrosine-based sorting signals on the cytoplasmic tail of cargo proteins such as APP, ATG9A, LAMP2 and NAGPA. Interacts with the C-terminal domain of GRID2. Interacts with GRIA1 and GRIA2; the interaction is indirect via CACNG3. Interacts with CACNG3; CACNG3 associates GRIA1 and GRIA2 with the adaptor protein complex 4 (AP-4) to target them to the somatodendritic compartment of neurons. Interacts with HOOK1 and HOOK2; the interactions are direct, mediate the interaction between FTS-Hook-FHIP (FHF) complex and AP-4 and the perinuclear distribution of AP-4.

The protein resides in the golgi apparatus. The protein localises to the trans-Golgi network membrane. Its subcellular location is the early endosome. Functionally, component of the adaptor protein complex 4 (AP-4). Adaptor protein complexes are vesicle coat components involved both in vesicle formation and cargo selection. They control the vesicular transport of proteins in different trafficking pathways. AP-4 forms a non clathrin-associated coat on vesicles departing the trans-Golgi network (TGN) and may be involved in the targeting of proteins from the trans-Golgi network (TGN) to the endosomal-lysosomal system. It is also involved in protein sorting to the basolateral membrane in epithelial cells and the proper asymmetric localization of somatodendritic proteins in neurons. Within AP-4, the mu-type subunit AP4M1 is directly involved in the recognition and binding of tyrosine-based sorting signals found in the cytoplasmic part of cargos. The adaptor protein complex 4 (AP-4) may also recognize other types of sorting signal. This chain is AP-4 complex subunit mu-1, found in Mus musculus (Mouse).